The following is a 547-amino-acid chain: Chaperonin GroEL (547 aa).

Residues threonine 30–proline 33, lysine 51, aspartate 87–threonine 91, glycine 415, and aspartate 495 contribute to the ATP site.

The protein belongs to the chaperonin (HSP60) family. Forms a cylinder of 14 subunits composed of two heptameric rings stacked back-to-back. Interacts with the co-chaperonin GroES.

It localises to the cytoplasm. The catalysed reaction is ATP + H2O + a folded polypeptide = ADP + phosphate + an unfolded polypeptide.. Its function is as follows. Together with its co-chaperonin GroES, plays an essential role in assisting protein folding. The GroEL-GroES system forms a nano-cage that allows encapsulation of the non-native substrate proteins and provides a physical environment optimized to promote and accelerate protein folding. The protein is Chaperonin GroEL of Bartonella quintana (strain Toulouse) (Rochalimaea quintana).